The primary structure comprises 509 residues: ATP synthase subunit alpha (509 aa).

Position 169–176 (169–176 (GDRQTGKT)) interacts with ATP.

This sequence belongs to the ATPase alpha/beta chains family. In terms of assembly, F-type ATPases have 2 components, CF(1) - the catalytic core - and CF(0) - the membrane proton channel. CF(1) has five subunits: alpha(3), beta(3), gamma(1), delta(1), epsilon(1). CF(0) has three main subunits: a(1), b(2) and c(9-12). The alpha and beta chains form an alternating ring which encloses part of the gamma chain. CF(1) is attached to CF(0) by a central stalk formed by the gamma and epsilon chains, while a peripheral stalk is formed by the delta and b chains.

The protein resides in the cell inner membrane. It catalyses the reaction ATP + H2O + 4 H(+)(in) = ADP + phosphate + 5 H(+)(out). Produces ATP from ADP in the presence of a proton gradient across the membrane. The alpha chain is a regulatory subunit. This is ATP synthase subunit alpha from Mesorhizobium japonicum (strain LMG 29417 / CECT 9101 / MAFF 303099) (Mesorhizobium loti (strain MAFF 303099)).